The sequence spans 429 residues: 3-phosphoshikimate 1-carboxyvinyltransferase (429 aa).

3-phosphoshikimate is bound by residues lysine 11, serine 12, and arginine 16. Phosphoenolpyruvate is bound at residue lysine 11. 2 residues coordinate phosphoenolpyruvate: glycine 82 and arginine 110. The 3-phosphoshikimate site is built by serine 155, glutamine 157, aspartate 302, and lysine 329. Residue glutamine 157 participates in phosphoenolpyruvate binding. Aspartate 302 functions as the Proton acceptor in the catalytic mechanism. 2 residues coordinate phosphoenolpyruvate: arginine 333 and arginine 385.

This sequence belongs to the EPSP synthase family. Monomer.

The protein resides in the cytoplasm. It catalyses the reaction 3-phosphoshikimate + phosphoenolpyruvate = 5-O-(1-carboxyvinyl)-3-phosphoshikimate + phosphate. It functions in the pathway metabolic intermediate biosynthesis; chorismate biosynthesis; chorismate from D-erythrose 4-phosphate and phosphoenolpyruvate: step 6/7. Functionally, catalyzes the transfer of the enolpyruvyl moiety of phosphoenolpyruvate (PEP) to the 5-hydroxyl of shikimate-3-phosphate (S3P) to produce enolpyruvyl shikimate-3-phosphate and inorganic phosphate. This Helicobacter pylori (strain Shi470) protein is 3-phosphoshikimate 1-carboxyvinyltransferase.